Here is a 238-residue protein sequence, read N- to C-terminus: Glycerol uptake facilitator protein 4 (238 aa).

A run of 2 helical transmembrane segments spans residues 2–22 and 39–59; these read IHQL…GVGV and IFAI…FGNV. The NPA 1 signature appears at 62-64; sequence NPA. Transmembrane regions (helical) follow at residues 80-100, 135-155, and 158-178; these read FIPY…IVWI, FFVE…ISEV, and PGIV…GLGG. Residues 185–187 carry the NPA 2 motif; the sequence is NLA. The helical transmembrane segment at 211 to 231 threads the bilayer; sequence YGIIVPGIAPFVGAACAALFM.

Belongs to the MIP/aquaporin (TC 1.A.8) family.

The protein localises to the cell membrane. Transporter that facilitates the transmembrane diffusion of water, dihydroxyacetone, glycerol, urea, H(2)O(2) and D/L-lactic acid. Is involved in the cellular racemization of lactate and lactate metabolism, but has likely a more general physiological role. The transported molecule is indeed lactic acid and not the lactate anion, in agreement with the assumption that, with very few exceptions, MIPs (major intrinsic proteins) only facilitate the transport of uncharged solutes. This is Glycerol uptake facilitator protein 4 from Lactiplantibacillus plantarum (strain ATCC BAA-793 / NCIMB 8826 / WCFS1) (Lactobacillus plantarum).